The sequence spans 382 residues: MTEQRPLTIALVAGETSGDILGAGLIRALKERVPNARFVGVAGPRMQAEGCEAWYEMEELAVMGIVEVLGRLRRLLHIRADLTKRFGELKPDVFVGIDAPDFNITLEGNLKKQGIKTIHYVSPSVWAWRQKRVFKIGRATDLVLAFLPFEKAFYDKYNVPCRFIGHTMADAMPLDPDKNGARDVLGIPHDAHCLALLPGSRGAEVEMLSADFLKTAQLLRQTYPDLEIVVPLVNAKRREQFERIKAEVAPDLAVHLLDGMGREAMVASDAALLASGTAALECMLAKCPMVVGYRMKPFTFWLAKRLVKTEYVSLPNLLAGRELVKELLQEECEPQKLAAALLPLLANGKTSHAMHDTFRELHQQIRCNADEQAAQAVLELAQ.

It belongs to the LpxB family.

The enzyme catalyses 2-N,3-O-bis[(3R)-3-hydroxytetradecanoyl]-alpha-D-glucosaminyl 1-phosphate + UDP-2-N,3-O-bis[(3R)-3-hydroxytetradecanoyl]-alpha-D-glucosamine = lipid A disaccharide (E. coli) + UDP + H(+). It carries out the reaction a lipid X + a UDP-2-N,3-O-bis[(3R)-3-hydroxyacyl]-alpha-D-glucosamine = a lipid A disaccharide + UDP + H(+). It participates in glycolipid biosynthesis; lipid IV(A) biosynthesis; lipid IV(A) from (3R)-3-hydroxytetradecanoyl-[acyl-carrier-protein] and UDP-N-acetyl-alpha-D-glucosamine: step 5/6. Functionally, condensation of UDP-2,3-diacylglucosamine and 2,3-diacylglucosamine-1-phosphate to form lipid A disaccharide, a precursor of lipid A, a phosphorylated glycolipid that anchors the lipopolysaccharide to the outer membrane of the cell. This Escherichia coli O7:K1 (strain IAI39 / ExPEC) protein is Lipid-A-disaccharide synthase.